Reading from the N-terminus, the 902-residue chain is DNA mismatch repair protein MutS (902 aa).

654–661 (GPNMGGKS) contributes to the ATP binding site.

Belongs to the DNA mismatch repair MutS family.

This protein is involved in the repair of mismatches in DNA. It is possible that it carries out the mismatch recognition step. This protein has a weak ATPase activity. This Xanthomonas axonopodis pv. citri (strain 306) protein is DNA mismatch repair protein MutS.